A 385-amino-acid chain; its full sequence is T-box transcription factor TBX10 (385 aa).

Residues 69–252 (LEMKPLWEEF…SNPFAKGFRE (184 aa)) constitute a DNA-binding region (T-box). Disordered regions lie at residues 283–310 (GSAE…NQLL) and 328–359 (QNLY…AGDQ). Over residues 293 to 307 (KASASSSRTPTQPHN) the composition is skewed to polar residues. The span at 331-347 (YPGSPSRAGPPRARLAP) shows a compositional bias: low complexity.

It is found in the nucleus. Functionally, probable transcriptional regulator involved in developmental processes. The sequence is that of T-box transcription factor TBX10 (Tbx10) from Mus musculus (Mouse).